A 382-amino-acid polypeptide reads, in one-letter code: Mannitol-1-phosphate 5-dehydrogenase (382 aa).

3–14 (ALHFGAGNIGRG) contributes to the NAD(+) binding site.

This sequence belongs to the mannitol dehydrogenase family.

The enzyme catalyses D-mannitol 1-phosphate + NAD(+) = beta-D-fructose 6-phosphate + NADH + H(+). In Erwinia tasmaniensis (strain DSM 17950 / CFBP 7177 / CIP 109463 / NCPPB 4357 / Et1/99), this protein is Mannitol-1-phosphate 5-dehydrogenase.